Here is a 327-residue protein sequence, read N- to C-terminus: Glutaminase 1 (327 aa).

Substrate-binding residues include serine 74, asparagine 126, glutamate 170, asparagine 177, tyrosine 201, tyrosine 253, and valine 271.

This sequence belongs to the glutaminase family. As to quaternary structure, homotetramer.

The catalysed reaction is L-glutamine + H2O = L-glutamate + NH4(+). The protein is Glutaminase 1 (glsA1) of Bacillus subtilis (strain 168).